The following is a 267-amino-acid chain: Kit ligand (267 aa).

A signal peptide spans 1–25 (MKKTQTWIITCIYLQLLLFNPLVHT). Glutamine 26 is subject to Pyrrolidone carboxylic acid. Over 26 to 215 (QGICRNRVTD…SNSIEDSSLQ (190 aa)) the chain is Extracellular. Cystine bridges form between cysteine 29–cysteine 114 and cysteine 68–cysteine 164. N-linked (GlcNAc...) asparagine glycans are attached at residues asparagine 90, asparagine 97, asparagine 145, and asparagine 196. A helical membrane pass occupies residues 216 to 238 (WAAVALPAFFSLVIGFAFGALYW). Residues 239 to 267 (KKKQPNLTRTVENRQINEEDNEISMLQEK) are Cytoplasmic-facing.

It belongs to the SCF family. Homodimer, non-covalently linked. Heterotetramer with KIT, binding two KIT molecules; thereby mediates KIT dimerization and subsequent activation by autophosphorylation. A soluble form is produced by proteolytic processing of the extracellular domain.

The protein localises to the cytoplasm. It localises to the cytoskeleton. The protein resides in the cell membrane. Its subcellular location is the cell projection. It is found in the lamellipodium. The protein localises to the filopodium. It localises to the secreted. Functionally, ligand for the receptor-type protein-tyrosine kinase KIT. Plays an essential role in the regulation of cell survival and proliferation, hematopoiesis, stem cell maintenance, gametogenesis, mast cell development, migration and function, and in melanogenesis. KITLG/SCF binding can activate several signaling pathways. Promotes phosphorylation of PIK3R1, the regulatory subunit of phosphatidylinositol 3-kinase, and subsequent activation of the kinase AKT1. KITLG/SCF and KIT also transmit signals via GRB2 and activation of RAS, RAF1 and the MAP kinases MAPK1/ERK2 and/or MAPK3/ERK1. KITLG/SCF and KIT promote activation of STAT family members STAT1, STAT3 and STAT5. KITLG/SCF and KIT promote activation of PLCG1, leading to the production of the cellular signaling molecules diacylglycerol and inositol 1,4,5-trisphosphate. KITLG/SCF acts synergistically with other cytokines, probably interleukins. This chain is Kit ligand (KITLG), found in Ovis aries (Sheep).